The chain runs to 186 residues: Cell division protein SepF (186 aa).

Disordered regions lie at residues 14–59 (EHDE…NETS) and 157–186 (GRSQ…RLAQ). The span at 16–27 (DEYEEDYDEEME) shows a compositional bias: acidic residues. Over residues 159–171 (SQESNETSSSVSS) the composition is skewed to low complexity.

The protein belongs to the SepF family. As to quaternary structure, homodimer. Interacts with FtsZ.

The protein localises to the cytoplasm. Cell division protein that is part of the divisome complex and is recruited early to the Z-ring. Probably stimulates Z-ring formation, perhaps through the cross-linking of FtsZ protofilaments. Its function overlaps with FtsA. In Synechocystis sp. (strain ATCC 27184 / PCC 6803 / Kazusa), this protein is Cell division protein SepF.